The chain runs to 119 residues: Large ribosomal subunit protein uL24 (119 aa).

Belongs to the universal ribosomal protein uL24 family. Part of the 50S ribosomal subunit.

Its function is as follows. One of two assembly initiator proteins, it binds directly to the 5'-end of the 23S rRNA, where it nucleates assembly of the 50S subunit. One of the proteins that surrounds the polypeptide exit tunnel on the outside of the subunit. The sequence is that of Large ribosomal subunit protein uL24 from Leptospira interrogans serogroup Icterohaemorrhagiae serovar copenhageni (strain Fiocruz L1-130).